The sequence spans 1520 residues: Putative lipoprotein AcfD homolog (1520 aa).

The N-terminal stretch at 1–23 (MNKKFKYKKSLLAAILSATLLAG) is a signal peptide. Disordered regions lie at residues 22–107 (AGCD…GATC) and 226–247 (NAAT…TTPG). C24 carries N-palmitoyl cysteine lipidation. A lipid anchor (S-diacylglycerol cysteine) is attached at C24. Residues 31–42 (SSSDTPPVDSGT) are compositionally biased toward low complexity. The segment covering 51–77 (DPTPNPEPTPEPTPDPEPTPEPIPDPE) has biased composition (pro residues). Residues 97–107 (GGSQRVTGATC) show a composition bias toward polar residues. Residues 234 to 247 (STHTSPVVPVTTPG) are compositionally biased toward low complexity. The region spanning 1081–1381 (GNMQSTGLWA…MYAQLKEWAE (301 aa)) is the Peptidase M60 domain. The segment at 1498–1520 (DLPKPEQGPETINQVTEHKMSAE) is disordered.

The protein to V.cholerae AcfD (VC_0845).

Its subcellular location is the cell inner membrane. Its function is as follows. Involved in a type II secretion system (T2SS, formerly general secretion pathway, GSP) for the export of folded proteins across the outer membrane. This Escherichia coli (strain K12) protein is Putative lipoprotein AcfD homolog (yghJ).